Reading from the N-terminus, the 297-residue chain is 3-mercaptopyruvate sulfurtransferase (297 aa).

Residue Ala-2 is modified to N-acetylalanine. A phosphoserine mark is found at Ser-3, Trp-15, Pro-23, and Ser-35. The 120-residue stretch at Ala-25–Ser-144 folds into the Rhodanese 1 domain. Lys-40 carries the post-translational modification N6-acetyllysine; alternate. An N6-succinyllysine; alternate modification is found at Lys-40. The tract at residues Gly-145–Pro-160 is hinge. Lys-146 and Lys-164 each carry N6-succinyllysine. The Rhodanese 2 domain maps to Glu-174–Val-288. Arg-188 provides a ligand contact to substrate. The Cysteine persulfide intermediate role is filled by Cys-248.

As to quaternary structure, monomer (active form). Homodimer; disulfide-linked (inactive form).

Its subcellular location is the cytoplasm. It is found in the mitochondrion. The protein localises to the synapse. The protein resides in the synaptosome. It catalyses the reaction 2-oxo-3-sulfanylpropanoate + [thioredoxin]-dithiol = [thioredoxin]-disulfide + hydrogen sulfide + pyruvate + H(+). By oxidative stress, and thioredoxin. Under oxidative stress conditions, the catalytic cysteine site is converted to a sulfenate which inhibits the MPST enzyme activity. Reduced thioredoxin cleaves an intersubunit disulfide bond to turn on the redox switch and reactivate the enzyme. Functionally, transfer of a sulfur ion to cyanide or to other thiol compounds. Also has weak rhodanese activity. Detoxifies cyanide and is required for thiosulfate biosynthesis. Acts as an antioxidant. In combination with cysteine aminotransferase (CAT), contributes to the catabolism of cysteine and is an important producer of hydrogen sulfide in the brain, retina and vascular endothelial cells. Hydrogen sulfide H(2)S is an important synaptic modulator, signaling molecule, smooth muscle contractor and neuroprotectant. Its production by the 3MST/CAT pathway is regulated by calcium ions. The chain is 3-mercaptopyruvate sulfurtransferase (MPST) from Homo sapiens (Human).